The chain runs to 437 residues: Trigger factor (437 aa).

A PPIase FKBP-type domain is found at 165–251; sequence GDLVVIDFKG…LHTIKEKEKI (87 aa).

The protein belongs to the FKBP-type PPIase family. Tig subfamily.

It is found in the cytoplasm. It carries out the reaction [protein]-peptidylproline (omega=180) = [protein]-peptidylproline (omega=0). Its function is as follows. Involved in protein export. Acts as a chaperone by maintaining the newly synthesized protein in an open conformation. Functions as a peptidyl-prolyl cis-trans isomerase. The protein is Trigger factor of Nitratiruptor sp. (strain SB155-2).